The primary structure comprises 81 residues: Large ribosomal subunit protein bL31B (81 aa).

Belongs to the bacterial ribosomal protein bL31 family. Type B subfamily. As to quaternary structure, part of the 50S ribosomal subunit.

This chain is Large ribosomal subunit protein bL31B, found in Bdellovibrio bacteriovorus (strain ATCC 15356 / DSM 50701 / NCIMB 9529 / HD100).